The primary structure comprises 659 residues: DNA ligase (659 aa).

NAD(+) is bound by residues 31–35 (DFVYD), 80–81 (SL), and Glu-109. Lys-111 serves as the catalytic N6-AMP-lysine intermediate. The NAD(+) site is built by Arg-132, Glu-166, Lys-281, and Lys-305. The Zn(2+) site is built by Cys-398, Cys-401, Cys-416, and Cys-421. A BRCT domain is found at 581 to 659 (VTTHPFNGKT…EATFKVKINE (79 aa)).

The protein belongs to the NAD-dependent DNA ligase family. LigA subfamily. Mg(2+) serves as cofactor. It depends on Mn(2+) as a cofactor.

The catalysed reaction is NAD(+) + (deoxyribonucleotide)n-3'-hydroxyl + 5'-phospho-(deoxyribonucleotide)m = (deoxyribonucleotide)n+m + AMP + beta-nicotinamide D-nucleotide.. Functionally, DNA ligase that catalyzes the formation of phosphodiester linkages between 5'-phosphoryl and 3'-hydroxyl groups in double-stranded DNA using NAD as a coenzyme and as the energy source for the reaction. It is essential for DNA replication and repair of damaged DNA. The sequence is that of DNA ligase from Acholeplasma laidlawii (strain PG-8A).